A 244-amino-acid polypeptide reads, in one-letter code: 1-(5-phosphoribosyl)-5-[(5-phosphoribosylamino)methylideneamino] imidazole-4-carboxamide isomerase (244 aa).

Residue Asp-8 is the Proton acceptor of the active site. Asp-129 (proton donor) is an active-site residue.

This sequence belongs to the HisA/HisF family.

It localises to the cytoplasm. The enzyme catalyses 1-(5-phospho-beta-D-ribosyl)-5-[(5-phospho-beta-D-ribosylamino)methylideneamino]imidazole-4-carboxamide = 5-[(5-phospho-1-deoxy-D-ribulos-1-ylimino)methylamino]-1-(5-phospho-beta-D-ribosyl)imidazole-4-carboxamide. The protein operates within amino-acid biosynthesis; L-histidine biosynthesis; L-histidine from 5-phospho-alpha-D-ribose 1-diphosphate: step 4/9. This is 1-(5-phosphoribosyl)-5-[(5-phosphoribosylamino)methylideneamino] imidazole-4-carboxamide isomerase from Thermodesulfovibrio yellowstonii (strain ATCC 51303 / DSM 11347 / YP87).